Consider the following 489-residue polypeptide: GTPase Der (489 aa).

EngA-type G domains follow at residues 3–166 (PVVA…FDDV) and 201–374 (IKLA…DSST). GTP is bound by residues 9–16 (GRPNVGKS), 56–60 (DTGGI), 118–121 (NKTD), 207–214 (GRPNVGKS), 254–258 (DTAGV), and 319–322 (NKWD). Residues 375–459 (KRISTSILTR…PIRIEFREGT (85 aa)) form the KH-like domain.

This sequence belongs to the TRAFAC class TrmE-Era-EngA-EngB-Septin-like GTPase superfamily. EngA (Der) GTPase family. As to quaternary structure, associates with the 50S ribosomal subunit.

Its function is as follows. GTPase that plays an essential role in the late steps of ribosome biogenesis. The sequence is that of GTPase Der from Psychromonas ingrahamii (strain DSM 17664 / CCUG 51855 / 37).